A 29-amino-acid chain; its full sequence is Brevinin-2Tc (29 aa).

A disulfide bridge links cysteine 23 with cysteine 29.

The protein belongs to the frog skin active peptide (FSAP) family. Brevinin subfamily. In terms of tissue distribution, expressed by the skin glands.

Its subcellular location is the secreted. In terms of biological role, antibacterial activity against representative Gram-negative and Gram-positive bacteria. This Rana temporaria (European common frog) protein is Brevinin-2Tc.